A 295-amino-acid chain; its full sequence is Oxidoreductase AN1597 (295 aa).

Belongs to the asaB hydroxylase/desaturase family.

Its pathway is secondary metabolite biosynthesis; terpenoid biosynthesis. Functionally, oxidoreductase; part of the gene cluster that mediates the biosynthesis of the diterpene ent-pimara-8(14),15-diene (PD). Within the cluster, the HMG-CoA reductase AN1593 functions in the mevalonate pathway, which produces isoprenoid precursors. The geranylgeranyl pyrophosphate (GGPP) synthase AN1592 is needed in the formation of GGPP, the precursor for diterpenes. Lastly, the pimaradiene synthase pbcA performs the 2 cyclization steps that convert GGPP to ent-pimara-8(14),15-diene. The putative roles of the remaining cluster enzymes in ent-pimara-8(14),15-diene biosynthesis is unclear. The cytochrome P450 monooxygenase AN1598, the glutathione S-transferase AN1595, the oxidoreductases AN1596 and AN1597 probably function as decorative enzymes. It is possible that in biological conditions the compound is oxidized to ent-pimara-8(14),15-dien-19-oic acid, which is a bioactive diterpene compound predominant in many plant extracts. The sequence is that of Oxidoreductase AN1597 from Emericella nidulans (strain FGSC A4 / ATCC 38163 / CBS 112.46 / NRRL 194 / M139) (Aspergillus nidulans).